Here is a 256-residue protein sequence, read N- to C-terminus: MLIKSEGIVLRTTDYGETNKIVTLLTREHGKIGVMARGAKKSNSRLSAISQPFLYGTFLIQSSTGLGTLQQGEMIESMRTIREDLFLTAYAAYMTELLDKGTEEKKPNPYLFELLLQSLRHLNEGTDADIILFIVEVKMLSVMGMKPELDQCVHCGQKEGQFHFSIRDNGFICQNCFSKDPYKLPLSPAAARLLRLFHYFDLSRLGQVDVKPQTKQEIRQVLDHYYDEYSGLYLKSKKFMNQMESMKKLMGGENKS.

It belongs to the RecO family.

Functionally, involved in DNA repair and RecF pathway recombination. This chain is DNA repair protein RecO, found in Bacillus pumilus (strain SAFR-032).